The chain runs to 405 residues: CMP-sialic acid transporter 3 (405 aa).

Residues 1 to 39 (MKNGIAECPACHSKLVSPGSKTISRAYDDHKIRVSSKQR) are Cytoplasmic-facing. A helical transmembrane segment spans residues 40-60 (VLNVLLVVGDCMLVGLQPVLV). Residues 61–73 (YMSKVDGKFNFSP) lie on the Lumenal side of the membrane. The helical transmembrane segment at 74-94 (ISVNFLTEIAKVIFAIVMLLI) threads the bilayer. At 95–142 (QARHQKVGEKPLLSVSTFVQAARNNVLLAVPALLYAINNYLKFTMQLY) the chain is on the cytoplasmic side. Residues 143-163 (FNPATVKMLSNLKVLVIAVLL) traverse the membrane as a helical segment. The Lumenal segment spans residues 164 to 170 (KMVMKRR). The chain crosses the membrane as a helical span at residues 171 to 191 (FSIIQWEALALLLIGISVNQL). Residues 192 to 199 (RSLPEGAT) lie on the Cytoplasmic side of the membrane. The helical transmembrane segment at 200-220 (AIGIPLATGAYVCTVIFVTVP) threads the bilayer. Residues 221 to 243 (SMASVFNEYALKSQYDTSIYLQN) are Lumenal-facing. The helical transmembrane segment at 244-264 (LFLYGYGAIFNFLGILGTVIY) threads the bilayer. Residues 265-280 (KGPGSFDILQGHSRAT) are Cytoplasmic-facing. The helical transmembrane segment at 281-301 (MFLILNNAAQGILSSFFFKYA) threads the bilayer. At 302 to 321 (DTILKKYSSTVATIFTGIAS) the chain is on the lumenal side. The helical transmembrane segment at 322 to 342 (AALFGHVITMNFLLGISIVFI) threads the bilayer. Over 343 to 405 (SMHQFFSPLA…SDDRTPLLPR (63 aa)) the chain is Cytoplasmic. The disordered stretch occupies residues 385-405 (GANEEASHRGESDDRTPLLPR). Basic and acidic residues predominate over residues 389-405 (EASHRGESDDRTPLLPR).

The protein belongs to the nucleotide-sugar transporter family. CMP-Sialate:CMP antiporter (TC 2.A.7.12) subfamily.

The protein resides in the golgi apparatus membrane. Sugar transporter involved in the transport of CMP-sialic acid from the cytoplasm into the Golgi. The polypeptide is CMP-sialic acid transporter 3 (UTR6) (Arabidopsis thaliana (Mouse-ear cress)).